A 347-amino-acid polypeptide reads, in one-letter code: uncharacterized protein (347 aa).

A signal peptide spans 1 to 21; sequence MNKKSLNIVVMFGILMILAFS.

It belongs to the bacterial solute-binding protein 1 family. WtpA subfamily.

This is an uncharacterized protein from Methanococcus maripaludis (strain C5 / ATCC BAA-1333).